A 118-amino-acid chain; its full sequence is Small ribosomal subunit protein uS13 (118 aa).

Residues 95-118 form a disordered region; that stretch reads LPVRGQRTRTNARTRKGPKKLINK.

Belongs to the universal ribosomal protein uS13 family. In terms of assembly, part of the 30S ribosomal subunit. Forms a loose heterodimer with protein S19. Forms two bridges to the 50S subunit in the 70S ribosome.

Functionally, located at the top of the head of the 30S subunit, it contacts several helices of the 16S rRNA. In the 70S ribosome it contacts the 23S rRNA (bridge B1a) and protein L5 of the 50S subunit (bridge B1b), connecting the 2 subunits; these bridges are implicated in subunit movement. Contacts the tRNAs in the A and P-sites. In Blochmanniella floridana, this protein is Small ribosomal subunit protein uS13.